The sequence spans 257 residues: Tryptophan synthase alpha chain (257 aa).

Catalysis depends on proton acceptor residues glutamate 47 and aspartate 58.

It belongs to the TrpA family. As to quaternary structure, tetramer of two alpha and two beta chains.

The catalysed reaction is (1S,2R)-1-C-(indol-3-yl)glycerol 3-phosphate + L-serine = D-glyceraldehyde 3-phosphate + L-tryptophan + H2O. The protein operates within amino-acid biosynthesis; L-tryptophan biosynthesis; L-tryptophan from chorismate: step 5/5. In terms of biological role, the alpha subunit is responsible for the aldol cleavage of indoleglycerol phosphate to indole and glyceraldehyde 3-phosphate. The sequence is that of Tryptophan synthase alpha chain from Listeria monocytogenes serotype 4b (strain F2365).